Reading from the N-terminus, the 461-residue chain is MVNGEAEAECTRASLLGRYEIGRTLGEGNFGKVKYARHLATGAHFAIKILDRNKILSLRFDDQIRREIGTLKLLKHPNVVRLHEVAASKTKIYMVLEYVNGGELFDKIAVKGKLSEHEGRRLFQQLIDAVSYCHDKGVYHRDLKPENVLVDRRGNIKISDFGLSALPQHLGNDGLLHTTCGSPNYIAPEVLQNRGYDGSLSDIWSCGVILYVMLVGYLPFDDRNLVVLYQKIFKGDTQIPKWLSPSARDLLRRILEPNPMKRINIAGIKEHEWFQKDYTPVVPYDDDDDNYLDSVLPIKEQIDEAKQEKPTHINAFQLIGMASALDLSGFFEEEDASQRKIRFTSTHSPKDLFDKIENVVTEMGFQVQRGNSKLKVMKNGRGSKNLRNPSSFLVCTEVVELGPSLYVVELKKSHGDPILYRQLCERLSDELGVCKTEQIQRTESLEDDLESFDSGSSLPGF.

Positions 19-274 (YEIGRTLGEG…IAGIKEHEWF (256 aa)) constitute a Protein kinase domain. ATP contacts are provided by residues 25–33 (LGEGNFGKV) and lysine 48. Aspartate 142 functions as the Proton acceptor in the catalytic mechanism. The tract at residues 160–189 (DFGLSALPQHLGNDGLLHTTCGSPNYIAPE) is activation loop. Residues 308–332 (EKPTHINAFQLIGMASALDLSGFFE) form the NAF domain. Residues 338 to 367 (QRKIRFTSTHSPKDLFDKIENVVTEMGFQV) are PPI.

This sequence belongs to the protein kinase superfamily. CAMK Ser/Thr protein kinase family. SNF1 subfamily. It depends on Mn(2+) as a cofactor.

The enzyme catalyses L-seryl-[protein] + ATP = O-phospho-L-seryl-[protein] + ADP + H(+). The catalysed reaction is L-threonyl-[protein] + ATP = O-phospho-L-threonyl-[protein] + ADP + H(+). In terms of biological role, CIPK serine-threonine protein kinases interact with CBL proteins. Binding of a CBL protein to the regulatory NAF domain of CIPK protein lead to the activation of the kinase in a calcium-dependent manner. The sequence is that of CBL-interacting protein kinase 1 (CIPK1) from Oryza sativa subsp. japonica (Rice).